The following is a 592-amino-acid chain: Putative amidase ARB_02965 (592 aa).

The signal sequence occupies residues Met1–Ala21. Residue Asn120 is glycosylated (N-linked (GlcNAc...) asparagine). Lys161 acts as the Charge relay system in catalysis. Asn217 carries an N-linked (GlcNAc...) asparagine glycan. Ser242 serves as the catalytic Charge relay system. Residues Ser242 and Thr263–Ser266 contribute to the substrate site. Ser266 serves as the catalytic Acyl-ester intermediate. N-linked (GlcNAc...) asparagine glycosylation is found at Asn326, Asn430, and Asn528.

This sequence belongs to the amidase family.

Its subcellular location is the secreted. The chain is Putative amidase ARB_02965 from Arthroderma benhamiae (strain ATCC MYA-4681 / CBS 112371) (Trichophyton mentagrophytes).